We begin with the raw amino-acid sequence, 363 residues long: Trichothecene biosynthesis protein 14 (363 aa).

It belongs to the TRI14 family.

Its function is as follows. Part of the gene cluster that mediates the production of the antimicrobial trichothecene harzianum A (HA) that plays a role in Botrytis cinerea antagonistic activity and plant defense priming. The biosynthesis of harzianum A begins with the cyclization of farnesyl diphosphate to trichodiene and is catalyzed by the trichodiene synthase TRI5. Trichodiene undergoes a series of oxygenations catalyzed by the cytochrome P450 monooxygenase TRI4. TRI4 controls the addition of 3 oxygens at C-2, C-11, and the C-12, C-13-epoxide to form the intermediate isotrichodiol. Isotrichodiol then undergoes a non-enzymatic isomerization and cyclization to form 12,13-epoxytrichothec-9-ene (EPT) which is further converted to trichodermol by the cytochrome P450 monooxygenase TRI11 via C-4 hydroxylation. The last step of HA synthesis is esterification of an octatriendioyl moiety to the C-4 oxygen of trichodermol. The octatriendioyl moiety is probably produced by the polyketide synthase TRI17 and the esterification performed by the trichothecene O-acetyltransferase TRI3. The protein is Trichothecene biosynthesis protein 14 of Trichoderma arundinaceum.